We begin with the raw amino-acid sequence, 352 residues long: C-X-C chemokine receptor type 4 (352 aa).

The tract at residues 1 to 21 (MEGISIYTSDNYSEELGSGDY) is important for chemokine binding and signaling. Topologically, residues 1 to 38 (MEGISIYTSDNYSEELGSGDYDSIKEPCFREENAHFNR) are extracellular. A Sulfotyrosine modification is found at tyrosine 7. The N-linked (GlcNAc...) asparagine glycan is linked to asparagine 11. Tyrosine 12 carries the post-translational modification Sulfotyrosine. O-linked (Xyl...) (chondroitin sulfate) serine glycosylation occurs at serine 18. Tyrosine 21 is modified (sulfotyrosine). Cystine bridges form between cysteine 28–cysteine 274 and cysteine 109–cysteine 186. The helical transmembrane segment at 39 to 63 (IFLPTIYSIIFLTGIVGNGLVILVM) threads the bilayer. Residues 64-77 (GYQKKLRSMTDKYR) are Cytoplasmic-facing. A helical transmembrane segment spans residues 78–99 (LHLSVADLLFVITLPFWAVDAV). The tract at residues 94–97 (WAVD) is chemokine binding. Topologically, residues 100 to 110 (ANWYFGNFLCK) are extracellular. The helical transmembrane segment at 111–130 (AVHVIYTVNLYSSVLILAFI) threads the bilayer. Residues 113 to 117 (HVIYT) form a chemokine binding region. Residues 131–154 (SLDRYLAIVHATNSQRPRKLLAEK) are Cytoplasmic-facing. Residues 133 to 135 (DRY) carry the Important for signaling motif. The segment at 135–147 (YLAIVHATNSQRP) is involved in dimerization; when bound to chemokine. Residues 155-174 (VVYVGVWIPALLLTIPDFIF) form a helical membrane-spanning segment. Residues 175–195 (ANVSEAEDRYICDRFYPNDLW) lie on the Extracellular side of the membrane. A chemokine binding, important for signaling region spans residues 186–190 (CDRFY). The tract at residues 191 to 210 (PNDLWVVVFQFQHIMVGLIL) is involved in dimerization. The helical transmembrane segment at 196–216 (VVVFQFQHIMVGLILPGIVIL) threads the bilayer. Topologically, residues 217 to 241 (SCYCIIISKLSHSKGHQKRKALKTT) are cytoplasmic. Residues 242–261 (VILILAFFACWLPYYIGISI) form a helical membrane-spanning segment. The Extracellular portion of the chain corresponds to 262 to 282 (DSFILLEIIKQGCEFESTVHK). An involved in dimerization region spans residues 266–268 (LLE). Residues 283-302 (WISITEALAFFHCCLNPILY) form a helical membrane-spanning segment. Over 303 to 352 (AFLGAKFKSSAQHALTSVSRGSSLKILSKGKRGGHSSVSTESESSSFHSS) the chain is Cytoplasmic. Phosphoserine is present on residues serine 319 and serine 321. 2 positions are modified to phosphoserine; by PKC and GRK6: serine 324 and serine 325. Residues 329–352 (LSKGKRGGHSSVSTESESSSFHSS) form a disordered region. Serine 330 is modified (phosphoserine; by GRK6). Lysine 331 participates in a covalent cross-link: Glycyl lysine isopeptide (Lys-Gly) (interchain with G-Cter in ubiquitin). The segment covering 337-352 (HSSVSTESESSSFHSS) has biased composition (low complexity). The residue at position 339 (serine 339) is a Phosphoserine; by GRK6. 2 positions are modified to phosphoserine: serine 348 and serine 351.

The protein belongs to the G-protein coupled receptor 1 family. As to quaternary structure, monomer. Can form homodimers. Interacts with CD164. Interacts with ARRB2; the interaction is dependent on the C-terminal phosphorylation of CXCR4 and allows activation of MAPK1 and MAPK3. Interacts with ARR3; the interaction is dependent on the C-terminal phosphorylation of CXCR4 and modulates calcium mobilization. Interacts with RNF113A; the interaction, enhanced by CXCL12, promotes CXCR4 ubiquitination and subsequent degradation. Interacts (via the cytoplasmic C-terminal) with ITCH (via the WW domains I and II); the interaction, enhanced by CXCL12, promotes CXCR4 ubiquitination and leads to its degradation. Interacts with extracellular ubiquitin. Interacts with DBN1; this interaction is enhanced by antigenic stimulation. Following LPS binding, may form a complex with GDF5, HSP90AA1 and HSPA8. In terms of processing, phosphorylated on agonist stimulation. Rapidly phosphorylated on serine and threonine residues in the C-terminal. Phosphorylation at Ser-324 and Ser-325 leads to recruitment of ITCH, ubiquitination and protein degradation. Post-translationally, ubiquitinated after ligand binding, leading to its degradation. Ubiquitinated by ITCH at the cell membrane on agonist stimulation. The ubiquitin-dependent mechanism, endosomal sorting complex required for transport (ESCRT), then targets CXCR4 for lysosomal degradation. This process is dependent also on prior Ser-/Thr-phosphorylation in the C-terminal of CXCR4. Also binding of ARRB1 to STAM negatively regulates CXCR4 sorting to lysosomes though modulating ubiquitination of SFR5S. Sulfation is required for efficient binding of CXCL12/SDF-1alpha and promotes its dimerization. In terms of processing, O- and N-glycosylated. N-glycosylation can mask coreceptor function. The O-glycosylation chondroitin sulfate attachment does not affect interaction with CXCL12/SDF-1alpha nor its coreceptor activity.

It is found in the cell membrane. It localises to the cell junction. Its subcellular location is the early endosome. The protein localises to the late endosome. The protein resides in the lysosome. Functionally, receptor for the C-X-C chemokine CXCL12/SDF-1 that transduces a signal by increasing intracellular calcium ion levels and enhancing MAPK1/MAPK3 activation. Involved in the AKT signaling cascade. Plays a role in regulation of cell migration, e.g. during wound healing. Acts as a receptor for extracellular ubiquitin; leading to enhanced intracellular calcium ions and reduced cellular cAMP levels. Binds bacterial lipopolysaccharide (LPS) et mediates LPS-induced inflammatory response, including TNF secretion by monocytes. Involved in hematopoiesis and in cardiac ventricular septum formation. Also plays an essential role in vascularization of the gastrointestinal tract, probably by regulating vascular branching and/or remodeling processes in endothelial cells. Involved in cerebellar development. In the CNS, could mediate hippocampal-neuron survival. In Tupaia chinensis (Chinese tree shrew), this protein is C-X-C chemokine receptor type 4 (CXCR4).